The chain runs to 194 residues: Protein GrpE (194 aa).

Polar residues predominate over residues Met1–Pro13. The tract at residues Met1–Leu50 is disordered. Positions Arg21–Leu50 are enriched in low complexity.

This sequence belongs to the GrpE family. Homodimer.

It is found in the cytoplasm. Functionally, participates actively in the response to hyperosmotic and heat shock by preventing the aggregation of stress-denatured proteins, in association with DnaK and GrpE. It is the nucleotide exchange factor for DnaK and may function as a thermosensor. Unfolded proteins bind initially to DnaJ; upon interaction with the DnaJ-bound protein, DnaK hydrolyzes its bound ATP, resulting in the formation of a stable complex. GrpE releases ADP from DnaK; ATP binding to DnaK triggers the release of the substrate protein, thus completing the reaction cycle. Several rounds of ATP-dependent interactions between DnaJ, DnaK and GrpE are required for fully efficient folding. In Paraburkholderia xenovorans (strain LB400), this protein is Protein GrpE.